Here is a 597-residue protein sequence, read N- to C-terminus: Leishmanolysin (597 aa).

An N-terminal signal peptide occupies residues 1-39; that stretch reads MSVDSSSTHRHRCVAARLVPLAAAGAAVTVAVGTAAAWA. A propeptide spans 40 to 99 (activation peptide); it reads HAGAVQHRCIHDAMQARVRQSVAAQRMAPSAVSAVGLPHVTLDAGNTAAGADPSTGTANV. Intrachain disulfides connect Cys-124-Cys-141 and Cys-190-Cys-229. Residue His-263 coordinates Zn(2+). Residue Glu-264 is part of the active site. His-267 contributes to the Zn(2+) binding site. N-linked (GlcNAc...) asparagine glycosylation occurs at Asn-299. 7 cysteine pairs are disulfide-bonded: Cys-313–Cys-383, Cys-390–Cys-452, Cys-403–Cys-422, Cys-412–Cys-486, Cys-463–Cys-507, Cys-512–Cys-562, and Cys-532–Cys-555. His-332 serves as a coordination point for Zn(2+). A glycan (N-linked (GlcNAc...) asparagine) is linked at Asn-404. A lipid anchor (GPI-anchor amidated asparagine) is attached at Asn-574. Residues 575–597 constitute a propeptide, removed in mature form; the sequence is AAGRRGPRAATALVVAALLAVAL.

Belongs to the peptidase M8 family. Zn(2+) serves as cofactor.

The protein resides in the cell membrane. The catalysed reaction is Preference for hydrophobic residues at P1 and P1' and basic residues at P2' and P3'. A model nonapeptide is cleaved at -Ala-Tyr-|-Leu-Lys-Lys-.. Functionally, has an integral role during the infection of macrophages in the mammalian host. In Leishmania amazonensis, this protein is Leishmanolysin (gp63).